The primary structure comprises 358 residues: Trace amine-associated receptor 7a (358 aa).

Over 1-47 (MDKLVDHFLSDQSRTMNEDLFSATSTELCYENLNRSCVRSPYSPGPR) the chain is Extracellular. Residue Asn34 is glycosylated (N-linked (GlcNAc...) asparagine). Disulfide bonds link Cys37–Cys201 and Cys120–Cys205. A helical membrane pass occupies residues 48 to 68 (LILYAVFGFGAALAVCGNLLV). The Cytoplasmic segment spans residues 69-83 (MTSILHFRQLHSPAN). A helical membrane pass occupies residues 84–104 (FLVASLACADFLVGLTVMPFS). At 105-121 (TVRSVEGCWYFGESYCK) the chain is on the extracellular side. Residues 122–143 (FHSCFEGSFCYSSIFHLCFISV) traverse the membrane as a helical segment. The Cytoplasmic portion of the chain corresponds to 144-166 (DRYIAVSDPLTYPTRFTASVSGK). The helical transmembrane segment at 167–187 (CITFSWLLSIIYSFSLLYTGA) threads the bilayer. Residues 188–212 (NEAGLEDLVSVLTCVGGCQIAVNQS) lie on the Extracellular side of the membrane. Residue Asn210 is glycosylated (N-linked (GlcNAc...) asparagine). A helical membrane pass occupies residues 213–233 (WVFINFLLFLIPTLVMMTVYS). At 234–274 (KIFLIAKQQAQNIEKMSKQTARASESYKDRVAKRERKAAKT) the chain is on the cytoplasmic side. A helical transmembrane segment spans residues 275 to 295 (LGIAVAAFLLSWLPYFIDSII). Residues 296-309 (DAFLGFITPTYVYE) lie on the Extracellular side of the membrane. The helical transmembrane segment at 310 to 333 (ILVWIAYYNSAMNPLIYAFFYPWF) threads the bilayer. The Cytoplasmic segment spans residues 334-358 (RKAIKLIVTGKILRENSSTTNLFPE).

Belongs to the G-protein coupled receptor 1 family. As to expression, specifically expressed in neurons of the olfactory epithelium.

The protein resides in the cell membrane. Functionally, olfactory receptor specific for N,N-dimethylalkylamines trace amines. Trace amine compounds are enriched in animal body fluids and act on trace amine-associated receptors (TAARs) to elicit both intraspecific and interspecific innate behaviors. Ligand-binding causes a conformation change that triggers signaling via G(s)-class of G alpha proteins (GNAL or GNAS). The protein is Trace amine-associated receptor 7a of Mus musculus (Mouse).